We begin with the raw amino-acid sequence, 141 residues long: Putative pre-16S rRNA nuclease (141 aa).

This sequence belongs to the YqgF nuclease family.

The protein localises to the cytoplasm. In terms of biological role, could be a nuclease involved in processing of the 5'-end of pre-16S rRNA. The polypeptide is Putative pre-16S rRNA nuclease (Desulforudis audaxviator (strain MP104C)).